The chain runs to 395 residues: NADH-quinone oxidoreductase subunit D (395 aa).

The protein belongs to the complex I 49 kDa subunit family. As to quaternary structure, NDH-1 is composed of 14 different subunits. Subunits NuoB, C, D, E, F, and G constitute the peripheral sector of the complex.

Its subcellular location is the cell inner membrane. The enzyme catalyses a quinone + NADH + 5 H(+)(in) = a quinol + NAD(+) + 4 H(+)(out). Its function is as follows. NDH-1 shuttles electrons from NADH, via FMN and iron-sulfur (Fe-S) centers, to quinones in the respiratory chain. The immediate electron acceptor for the enzyme in this species is believed to be a menaquinone. Couples the redox reaction to proton translocation (for every two electrons transferred, four hydrogen ions are translocated across the cytoplasmic membrane), and thus conserves the redox energy in a proton gradient. The chain is NADH-quinone oxidoreductase subunit D from Chlorobium luteolum (strain DSM 273 / BCRC 81028 / 2530) (Pelodictyon luteolum).